The sequence spans 295 residues: ATP synthase gamma chain (295 aa).

The protein belongs to the ATPase gamma chain family. In terms of assembly, F-type ATPases have 2 components, CF(1) - the catalytic core - and CF(0) - the membrane proton channel. CF(1) has five subunits: alpha(3), beta(3), gamma(1), delta(1), epsilon(1). CF(0) has three main subunits: a, b and c.

The protein resides in the cell inner membrane. Its function is as follows. Produces ATP from ADP in the presence of a proton gradient across the membrane. The gamma chain is believed to be important in regulating ATPase activity and the flow of protons through the CF(0) complex. In Chlorobium phaeobacteroides (strain BS1), this protein is ATP synthase gamma chain.